The sequence spans 324 residues: Cathepsin L-like proteinase (324 aa).

The first 16 residues, 1-16 (MKLIIALAALIVVINA), serve as a signal peptide directing secretion. 3 disulfide bridges follow: cysteine 131-cysteine 174, cysteine 165-cysteine 206, and cysteine 263-cysteine 312. The active site involves cysteine 134. Catalysis depends on residues histidine 270 and asparagine 290.

It belongs to the peptidase C1 family. In terms of tissue distribution, expressed in larval carcasses and gut, and adult gut.

The protein is Cathepsin L-like proteinase of Phaedon cochleariae (Mustard beetle).